A 397-amino-acid polypeptide reads, in one-letter code: Sexual differentiation process protein isp7 (397 aa).

The region spanning 255 to 353 (PTTSIRLLRY…RYTIPFFLQG (99 aa)) is the Fe2OG dioxygenase domain.

Belongs to the iron/ascorbate-dependent oxidoreductase family.

The protein is Sexual differentiation process protein isp7 (isp7) of Schizosaccharomyces pombe (strain 972 / ATCC 24843) (Fission yeast).